The chain runs to 458 residues: MSWSILELIRNNPEVLKENLKRRFIDTSTVDKAVELDKKWRQTLQEVERLRHEHNLISSQIPKAPKEQKSELINKAKELLKTLEDKEKELQKIEEERENLLLSLPNLVHDSVPIGPDESYSVPIRFWGKFKVYKDDVNEFLKQTNGHKVDYEVINWKPVGHADMLENVLRLGDTKKAGEVAASRFYYLFNDIVWLDLALLLYAIDTITSRGYTLVLPPYMLRGEVIKSVIDLDTFKDAIYKIEGEDLYLIATAEHSIAALYYKEEIPKEELPLKLVGVSPAFRKEAGAANKDLKGIFRVHQFHKVEQFIFSSPEDSWKYHEEMIENAEEIFRGLGLPYRVINIASGDLGAPAAKKYDLEVWMPAQAKFREMVSCSNCLDWQAYRMRIRYVEKNNKKGYLHTLNSTAIASTRAITAILENFQKEDGVVEVPKVLRKYLETFSGAPKEYIYPKKKPNTTS.

An L-serine-binding site is contributed by 252 to 254 (TAE). ATP-binding positions include 283–285 (RKE) and V299. An L-serine-binding site is contributed by E306. 370–373 (EMVS) is an ATP binding site. Position 405 (T405) interacts with L-serine.

This sequence belongs to the class-II aminoacyl-tRNA synthetase family. Type-1 seryl-tRNA synthetase subfamily. Homodimer. The tRNA molecule binds across the dimer.

Its subcellular location is the cytoplasm. The catalysed reaction is tRNA(Ser) + L-serine + ATP = L-seryl-tRNA(Ser) + AMP + diphosphate + H(+). The enzyme catalyses tRNA(Sec) + L-serine + ATP = L-seryl-tRNA(Sec) + AMP + diphosphate + H(+). Its pathway is aminoacyl-tRNA biosynthesis; selenocysteinyl-tRNA(Sec) biosynthesis; L-seryl-tRNA(Sec) from L-serine and tRNA(Sec): step 1/1. Its function is as follows. Catalyzes the attachment of serine to tRNA(Ser). Is also able to aminoacylate tRNA(Sec) with serine, to form the misacylated tRNA L-seryl-tRNA(Sec), which will be further converted into selenocysteinyl-tRNA(Sec). This is Serine--tRNA ligase from Sulfolobus acidocaldarius (strain ATCC 33909 / DSM 639 / JCM 8929 / NBRC 15157 / NCIMB 11770).